Consider the following 547-residue polypeptide: Chaperonin GroEL 1 (547 aa).

Residues 30–33 (TLGP), K51, 87–91 (DGTTT), G415, and D496 contribute to the ATP site.

The protein belongs to the chaperonin (HSP60) family. Forms a cylinder of 14 subunits composed of two heptameric rings stacked back-to-back. Interacts with the co-chaperonin GroES.

It is found in the cytoplasm. It carries out the reaction ATP + H2O + a folded polypeptide = ADP + phosphate + an unfolded polypeptide.. Together with its co-chaperonin GroES, plays an essential role in assisting protein folding. The GroEL-GroES system forms a nano-cage that allows encapsulation of the non-native substrate proteins and provides a physical environment optimized to promote and accelerate protein folding. The chain is Chaperonin GroEL 1 from Rhodopseudomonas palustris (strain BisB5).